The chain runs to 158 residues: UPF0260 protein RHE_CH01262 (158 aa).

It belongs to the UPF0260 family.

The protein is UPF0260 protein RHE_CH01262 of Rhizobium etli (strain ATCC 51251 / DSM 11541 / JCM 21823 / NBRC 15573 / CFN 42).